The sequence spans 244 residues: Type III pantothenate kinase (244 aa).

11–18 (DAGNTSIK) is an ATP binding site. Residues tyrosine 90 and 97–100 (GIDR) contribute to the substrate site. Aspartate 99 serves as the catalytic Proton acceptor. Aspartate 119 contributes to the K(+) binding site. Threonine 122 is a binding site for ATP. Threonine 175 contacts substrate.

Belongs to the type III pantothenate kinase family. In terms of assembly, homodimer. NH4(+) serves as cofactor. It depends on K(+) as a cofactor.

It localises to the cytoplasm. The enzyme catalyses (R)-pantothenate + ATP = (R)-4'-phosphopantothenate + ADP + H(+). It functions in the pathway cofactor biosynthesis; coenzyme A biosynthesis; CoA from (R)-pantothenate: step 1/5. In terms of biological role, catalyzes the phosphorylation of pantothenate (Pan), the first step in CoA biosynthesis. This Marinomonas sp. (strain MWYL1) protein is Type III pantothenate kinase.